The following is a 344-amino-acid chain: S-adenosylmethionine:tRNA ribosyltransferase-isomerase (344 aa).

Belongs to the QueA family. As to quaternary structure, monomer.

Its subcellular location is the cytoplasm. It carries out the reaction 7-aminomethyl-7-carbaguanosine(34) in tRNA + S-adenosyl-L-methionine = epoxyqueuosine(34) in tRNA + adenine + L-methionine + 2 H(+). It participates in tRNA modification; tRNA-queuosine biosynthesis. Functionally, transfers and isomerizes the ribose moiety from AdoMet to the 7-aminomethyl group of 7-deazaguanine (preQ1-tRNA) to give epoxyqueuosine (oQ-tRNA). This Thiobacillus denitrificans (strain ATCC 25259 / T1) protein is S-adenosylmethionine:tRNA ribosyltransferase-isomerase.